Consider the following 335-residue polypeptide: Ketol-acid reductoisomerase (NADP(+)) 2 (335 aa).

Residues 1 to 180 (MKTYYEKDAN…GCTRAGVIET (180 aa)) form the KARI N-terminal Rossmann domain. NADP(+) contacts are provided by residues 24–27 (YGSQ), Arg47, Ser51, and 81–84 (DEQQ). Residue His106 is part of the active site. Gly132 contributes to the NADP(+) binding site. Residues 181-326 (TFQEETETDL…AELREMMSWI (146 aa)) enclose the KARI C-terminal knotted domain. Mg(2+) is bound by residues Asp189, Glu193, Glu225, and Glu229. Residue Ser250 coordinates substrate.

This sequence belongs to the ketol-acid reductoisomerase family. Requires Mg(2+) as cofactor.

The catalysed reaction is (2R)-2,3-dihydroxy-3-methylbutanoate + NADP(+) = (2S)-2-acetolactate + NADPH + H(+). It carries out the reaction (2R,3R)-2,3-dihydroxy-3-methylpentanoate + NADP(+) = (S)-2-ethyl-2-hydroxy-3-oxobutanoate + NADPH + H(+). It participates in amino-acid biosynthesis; L-isoleucine biosynthesis; L-isoleucine from 2-oxobutanoate: step 2/4. Its pathway is amino-acid biosynthesis; L-valine biosynthesis; L-valine from pyruvate: step 2/4. Involved in the biosynthesis of branched-chain amino acids (BCAA). Catalyzes an alkyl-migration followed by a ketol-acid reduction of (S)-2-acetolactate (S2AL) to yield (R)-2,3-dihydroxy-isovalerate. In the isomerase reaction, S2AL is rearranged via a Mg-dependent methyl migration to produce 3-hydroxy-3-methyl-2-ketobutyrate (HMKB). In the reductase reaction, this 2-ketoacid undergoes a metal-dependent reduction by NADPH to yield (R)-2,3-dihydroxy-isovalerate. This chain is Ketol-acid reductoisomerase (NADP(+)) 2, found in Bacillus cereus (strain ATCC 10987 / NRS 248).